We begin with the raw amino-acid sequence, 505 residues long: Aspartyl/glutamyl-tRNA(Asn/Gln) amidotransferase subunit B (505 aa).

Belongs to the GatB/GatE family. GatB subfamily. As to quaternary structure, heterotrimer of A, B and C subunits.

It carries out the reaction L-glutamyl-tRNA(Gln) + L-glutamine + ATP + H2O = L-glutaminyl-tRNA(Gln) + L-glutamate + ADP + phosphate + H(+). The enzyme catalyses L-aspartyl-tRNA(Asn) + L-glutamine + ATP + H2O = L-asparaginyl-tRNA(Asn) + L-glutamate + ADP + phosphate + 2 H(+). Allows the formation of correctly charged Asn-tRNA(Asn) or Gln-tRNA(Gln) through the transamidation of misacylated Asp-tRNA(Asn) or Glu-tRNA(Gln) in organisms which lack either or both of asparaginyl-tRNA or glutaminyl-tRNA synthetases. The reaction takes place in the presence of glutamine and ATP through an activated phospho-Asp-tRNA(Asn) or phospho-Glu-tRNA(Gln). The chain is Aspartyl/glutamyl-tRNA(Asn/Gln) amidotransferase subunit B from Streptomyces avermitilis (strain ATCC 31267 / DSM 46492 / JCM 5070 / NBRC 14893 / NCIMB 12804 / NRRL 8165 / MA-4680).